The chain runs to 511 residues: GMP synthase [glutamine-hydrolyzing] (511 aa).

The region spanning Leu5–Asp195 is the Glutamine amidotransferase type-1 domain. Cys82 acts as the Nucleophile in catalysis. Residues His169 and Glu171 contribute to the active site. The GMPS ATP-PPase domain maps to Trp196–Arg386. Ser223–Ser229 is an ATP binding site.

Homodimer.

It catalyses the reaction XMP + L-glutamine + ATP + H2O = GMP + L-glutamate + AMP + diphosphate + 2 H(+). It functions in the pathway purine metabolism; GMP biosynthesis; GMP from XMP (L-Gln route): step 1/1. In terms of biological role, catalyzes the synthesis of GMP from XMP. In Acetivibrio thermocellus (strain ATCC 27405 / DSM 1237 / JCM 9322 / NBRC 103400 / NCIMB 10682 / NRRL B-4536 / VPI 7372) (Clostridium thermocellum), this protein is GMP synthase [glutamine-hydrolyzing].